A 650-amino-acid polypeptide reads, in one-letter code: 1-deoxy-D-xylulose-5-phosphate synthase (650 aa).

Thiamine diphosphate contacts are provided by residues His-73 and 113-115 (SHA). Asp-145 provides a ligand contact to Mg(2+). Residues 146-147 (GA), Asn-175, Tyr-287, and Glu-369 each bind thiamine diphosphate. Asn-175 serves as a coordination point for Mg(2+).

This sequence belongs to the transketolase family. DXPS subfamily. In terms of assembly, homodimer. Mg(2+) serves as cofactor. It depends on thiamine diphosphate as a cofactor.

It carries out the reaction D-glyceraldehyde 3-phosphate + pyruvate + H(+) = 1-deoxy-D-xylulose 5-phosphate + CO2. Its pathway is metabolic intermediate biosynthesis; 1-deoxy-D-xylulose 5-phosphate biosynthesis; 1-deoxy-D-xylulose 5-phosphate from D-glyceraldehyde 3-phosphate and pyruvate: step 1/1. Catalyzes the acyloin condensation reaction between C atoms 2 and 3 of pyruvate and glyceraldehyde 3-phosphate to yield 1-deoxy-D-xylulose-5-phosphate (DXP). The protein is 1-deoxy-D-xylulose-5-phosphate synthase of Leifsonia xyli subsp. xyli (strain CTCB07).